Here is a 332-residue protein sequence, read N- to C-terminus: MSNGGNAGKKSSSYFHFGAGLGSGILSAVLLQPADLLKTRVQQSNHASLFTTIRELSQSPNSIRSFWRGTVPSALRTGFGSAIYFTSLNALRQNVARSNLLRTIGVVEQKSMVHSSSLPKLSNLANLTTGAVARAGAGFILMPMTIIKVRYESNLYAYKSIAGAGRDIFLTEGFRGFFSGFGATAIRDAPYAGLYVLFYEELKKRLSHIVHSSPQVEGLAEKVDLGLSKNMKGSTSASINFGSGVLAAGLATAITNPFDAIKTRIQLQPKKYTNLVMAGKKMVGEEGVKSLFDGLGLRMGRKAVSSALAWTIYEELIRRAEAVLKREKELVV.

Solcar repeat units lie at residues 11 to 94 (SSSY…LRQN), 121 to 205 (LSNL…LKKR), and 235 to 319 (TSAS…LIRR). The next 6 helical transmembrane spans lie at 17–42 (FGAG…TRVQ), 69–95 (GTVP…RQNV), 127–152 (LTTG…VRYE), 180–203 (GFGA…EELK), 239–265 (INFG…KTRI), and 294–312 (GLGL…AWTI).

Belongs to the mitochondrial carrier (TC 2.A.29) family. SLC25A38 subfamily.

It localises to the mitochondrion inner membrane. The catalysed reaction is glycine(in) = glycine(out). Its function is as follows. Mitochondrial glycine transporter that imports glycine into the mitochondrial matrix. Plays an important role in providing glycine for the first enzymatic step in heme biosynthesis, the condensation of glycine with succinyl-CoA to produce 5-aminolevulinate (ALA) in the mitochondrial matrix. The chain is Mitochondrial glycine transporter from Botryotinia fuckeliana (strain B05.10) (Noble rot fungus).